We begin with the raw amino-acid sequence, 245 residues long: Carboxy-S-adenosyl-L-methionine synthase (245 aa).

S-adenosyl-L-methionine contacts are provided by residues Tyr42, 67–69 (GCS), 92–93 (DN), 120–121 (DI), Asn135, and Arg202.

It belongs to the class I-like SAM-binding methyltransferase superfamily. Cx-SAM synthase family. As to quaternary structure, homodimer.

It carries out the reaction prephenate + S-adenosyl-L-methionine = carboxy-S-adenosyl-L-methionine + 3-phenylpyruvate + H2O. Functionally, catalyzes the conversion of S-adenosyl-L-methionine (SAM) to carboxy-S-adenosyl-L-methionine (Cx-SAM). The polypeptide is Carboxy-S-adenosyl-L-methionine synthase (Vibrio vulnificus (strain YJ016)).